A 373-amino-acid chain; its full sequence is Transaldolase (373 aa).

The active-site Schiff-base intermediate with substrate is the Lys143.

The protein belongs to the transaldolase family. Type 2 subfamily.

The protein localises to the cytoplasm. The catalysed reaction is D-sedoheptulose 7-phosphate + D-glyceraldehyde 3-phosphate = D-erythrose 4-phosphate + beta-D-fructose 6-phosphate. The protein operates within carbohydrate degradation; pentose phosphate pathway; D-glyceraldehyde 3-phosphate and beta-D-fructose 6-phosphate from D-ribose 5-phosphate and D-xylulose 5-phosphate (non-oxidative stage): step 2/3. In terms of biological role, transaldolase is important for the balance of metabolites in the pentose-phosphate pathway. The polypeptide is Transaldolase (Mycobacterium ulcerans (strain Agy99)).